The primary structure comprises 461 residues: MTLSIYSTLSKGKEAFKPLEGNKVRMYVCGMTVYDFCHIGHARVMVAFDVVSRWLRHSGYDVTYVRNITDIDDKIIRRANENGESFQDLVGRMIAAMHEDEARLNVLRPDSEPRATDHIAGMHAMIRTLIDKSYAYAPGNGDVYYRVGKFEGYGKLSRRKIEDLKIGARIEPGEAKEDPLDFVLWKGAKPGEPSWESPWGAGRPGWHIECSVMSTCCLGETFDIHGGGPDLVFPHHENEIAQSEAATGKRYANIWMHAGAVRVDGEKMSKSLGNFFTIREVLEKYHPEVVRYLLVSSHYRSPINYSEDSLREARAALERFYNALKGLPAAQPTGGDEYVARFNAAMNDDFNTPEACAVLFELAREVNRLRDTDLQSAASLAARLKELGGLLGVLQLEPEAFLQAGAADRVDAAEVEALIAARLAARAGKNWAESDRIRDQLAAMGVLLEDGKNGTTWRLVD.

Residue Cys-29 coordinates Zn(2+). Residues 31–41 carry the 'HIGH' region motif; sequence MTVYDFCHIGH. Residues Cys-210, His-235, and Glu-239 each coordinate Zn(2+). Positions 267 to 271 match the 'KMSKS' region motif; sequence KMSKS. Residue Lys-270 coordinates ATP.

It belongs to the class-I aminoacyl-tRNA synthetase family. Monomer. It depends on Zn(2+) as a cofactor.

Its subcellular location is the cytoplasm. It catalyses the reaction tRNA(Cys) + L-cysteine + ATP = L-cysteinyl-tRNA(Cys) + AMP + diphosphate. This chain is Cysteine--tRNA ligase, found in Azotobacter vinelandii (strain DJ / ATCC BAA-1303).